The chain runs to 361 residues: tRNA 2-selenouridine synthase (361 aa).

One can recognise a Rhodanese domain in the interval 12–135; the sequence is VLKNIPLIDV…FRRYLIDHLE (124 aa). Catalysis depends on cysteine 95, which acts as the S-selanylcysteine intermediate.

It belongs to the SelU family. Monomer.

It carries out the reaction 5-methylaminomethyl-2-thiouridine(34) in tRNA + selenophosphate + (2E)-geranyl diphosphate + H2O + H(+) = 5-methylaminomethyl-2-selenouridine(34) in tRNA + (2E)-thiogeraniol + phosphate + diphosphate. The catalysed reaction is 5-methylaminomethyl-2-thiouridine(34) in tRNA + (2E)-geranyl diphosphate = 5-methylaminomethyl-S-(2E)-geranyl-thiouridine(34) in tRNA + diphosphate. The enzyme catalyses 5-methylaminomethyl-S-(2E)-geranyl-thiouridine(34) in tRNA + selenophosphate + H(+) = 5-methylaminomethyl-2-(Se-phospho)selenouridine(34) in tRNA + (2E)-thiogeraniol. It catalyses the reaction 5-methylaminomethyl-2-(Se-phospho)selenouridine(34) in tRNA + H2O = 5-methylaminomethyl-2-selenouridine(34) in tRNA + phosphate. Its function is as follows. Involved in the post-transcriptional modification of the uridine at the wobble position (U34) of tRNA(Lys), tRNA(Glu) and tRNA(Gln). Catalyzes the conversion of 2-thiouridine (S2U-RNA) to 2-selenouridine (Se2U-RNA). Acts in a two-step process involving geranylation of 2-thiouridine (S2U) to S-geranyl-2-thiouridine (geS2U) and subsequent selenation of the latter derivative to 2-selenouridine (Se2U) in the tRNA chain. The polypeptide is tRNA 2-selenouridine synthase (Hydrogenovibrio crunogenus (strain DSM 25203 / XCL-2) (Thiomicrospira crunogena)).